Reading from the N-terminus, the 531-residue chain is DNA damage-binding protein cmr1 (531 aa).

Disordered stretches follow at residues 37–83 (GIFP…RGIA) and 218–264 (DASQ…MHIH). Residues 53–64 (KPKKKPAPKKIK) are compositionally biased toward basic residues. Residues 186-227 (VTPERIYTMTFHPSEAKPLIFAGDKMGNLGVLDASQERPVSS) form a WD 1 repeat. Acidic residues predominate over residues 233–245 (GDEEEQEDDDDPD). WD repeat units lie at residues 253–293 (PHTR…SVET), 300–340 (SDDV…RTAV), 345–385 (LSEK…HDDP), 392–431 (LSRL…ASWE), 454–497 (GRWV…LAQL), and 500–531 (DGIT…CLWM).

It belongs to the WD repeat DDB2/WDR76 family.

Its function is as follows. DNA-binding protein that binds to both single- and double-stranded DNA. Binds preferentially to UV-damaged DNA. May be involved in DNA-metabolic processes. This is DNA damage-binding protein cmr1 from Aspergillus clavatus (strain ATCC 1007 / CBS 513.65 / DSM 816 / NCTC 3887 / NRRL 1 / QM 1276 / 107).